An 87-amino-acid chain; its full sequence is Small ribosomal subunit protein bS20 (87 aa).

Belongs to the bacterial ribosomal protein bS20 family.

Binds directly to 16S ribosomal RNA. The polypeptide is Small ribosomal subunit protein bS20 (Rickettsia bellii (strain OSU 85-389)).